The primary structure comprises 475 residues: uncharacterized protein (475 aa).

Residues 7-28 form a helical membrane-spanning segment; it reads HVISIFETLGAYFINIFYNFLY. N73, N83, and N195 each carry an N-linked (GlcNAc...) asparagine; by host glycan. Positions 183–233 form a coiled coil; it reads ELEETYARLSSYNRSLLHQIEELTSEKKSLLADLSTLRKKYEKRQSEYRRL. Residues 295–305 are compositionally biased toward polar residues; sequence SQELTSKSPNN. The interval 295–324 is disordered; it reads SQELTSKSPNNYPVPHSRTIVSKPPDNYPV. N-linked (GlcNAc...) asparagine; by host glycosylation is found at N450 and N460.

The protein belongs to the asfivirus B475L family.

The protein localises to the host membrane. This is an uncharacterized protein from Ornithodoros (relapsing fever ticks).